Here is a 267-residue protein sequence, read N- to C-terminus: Putative N-acetylmuramoyl-L-alanine amidase RC0497 (267 aa).

Positions 1-25 (MSKSKAIENNGISNTNSPNGKYMAP) are disordered. Positions 10–19 (NGISNTNSPN) are enriched in polar residues. Residues 33 to 141 (TCVVITYSVS…NLDLKHDLVG (109 aa)) form the N-acetylmuramoyl-L-alanine amidase domain.

Belongs to the N-acetylmuramoyl-L-alanine amidase 2 family.

It is found in the secreted. The catalysed reaction is Hydrolyzes the link between N-acetylmuramoyl residues and L-amino acid residues in certain cell-wall glycopeptides.. In Rickettsia conorii (strain ATCC VR-613 / Malish 7), this protein is Putative N-acetylmuramoyl-L-alanine amidase RC0497.